The primary structure comprises 1093 residues: Isoleucine--tRNA ligase, chloroplastic/mitochondrial (1093 aa).

The interval 69-103 (PNNEFGHSSKRRSRGPVMAAKKASEGEKQEDGKYK) is disordered. Residues 90–103 (KASEGEKQEDGKYK) show a composition bias toward basic and acidic residues. Positions 155-165 (PYANGDLHMGH) match the 'HIGH' region motif. E682 is a binding site for L-isoleucyl-5'-AMP. The 'KMSKS' region signature appears at 723 to 727 (KMSKS). K726 contributes to the ATP binding site. Positions 1050, 1053, 1070, and 1073 each coordinate Zn(2+).

Belongs to the class-I aminoacyl-tRNA synthetase family.

It localises to the plastid. The protein localises to the chloroplast. Its subcellular location is the mitochondrion. The catalysed reaction is tRNA(Ile) + L-isoleucine + ATP = L-isoleucyl-tRNA(Ile) + AMP + diphosphate. This is Isoleucine--tRNA ligase, chloroplastic/mitochondrial from Arabidopsis thaliana (Mouse-ear cress).